Here is a 561-residue protein sequence, read N- to C-terminus: Acyl-CoA ligase ppsA (561 aa).

The N-linked (GlcNAc...) asparagine glycan is linked to asparagine 21. Residues 71–91 form a helical membrane-spanning segment; it reads SILYPALFLAIVGVGAVYMGA. Position 203-214 (203-214) interacts with AMP; sequence MFATSGTSGLPK. Asparagine 396 carries an N-linked (GlcNAc...) asparagine glycan. The interval 462 to 540 is AMP-binding; that stretch reads ELEAELAQHP…DSIPRNSGGK (79 aa).

This sequence belongs to the ATP-dependent AMP-binding enzyme family.

It is found in the membrane. It carries out the reaction acetate + ATP + CoA = acetyl-CoA + ADP + phosphate. The enzyme catalyses propanoate + ATP + CoA = propanoyl-CoA + AMP + diphosphate. It functions in the pathway secondary metabolite biosynthesis. In terms of biological role, acyl-CoA ligase; part of the gene cluster that mediates the biosynthesis of 2,4'-dihydroxy-3'-methoxypropiophenone. The first step of the pathway is the conversion of acetate into acetyl-CoA by the acyl-CoA ligase ppsA. Acetyl-CoA is then used as a starter unit by the polyketide synthase ppsB and condensed with 4 malonyl-CoA unit to produce the pentaketide backbone. During polyketide extension, the polykedite chain is probably reduced and dehydrated by the KR and PT domains, respectively. O-methylation seems to be catalyzed by an unknown methyltransferase rather than by the CMeT domain of ppsB. Two hydroxylations and one further decarboxylation step catalyzed by yet unknown enzymes are then required to yield 4'-hydroxy-3'-methoxypropiophenone. PpsC functions as a carrier protein to transport 4'-hydroxy-3'-methoxypropiophenone to a specific cell compartment in which 4'-hydroxy-3'-methoxypropiophenone is hydroxylated to 2,4'-dihydroxy-3'-methoxypropiophenone by a still to be identified enzyme. The chain is Acyl-CoA ligase ppsA from Aspergillus oryzae (strain ATCC 42149 / RIB 40) (Yellow koji mold).